A 193-amino-acid chain; its full sequence is ECF RNA polymerase sigma factor SigK (193 aa).

The sigma-70 factor domain-2 stretch occupies residues 35–101; sequence LYDRTRSRVY…RRAVDRVRSE (67 aa). A Polymerase core binding motif is present at residues 59–62; the sequence is ETTQ. A sigma-70 factor domain-4 region spans residues 140 to 187; sequence MGSLSDLQREAIQLAYYEGLTYVQVSERLSANLATIKSRMRGGIRGLK. Residues 161–180 constitute a DNA-binding region (H-T-H motif); the sequence is YVQVSERLSANLATIKSRMR.

Belongs to the sigma-70 factor family. ECF subfamily. In terms of assembly, interacts transiently with the RNA polymerase catalytic core formed by RpoA, RpoB, RpoC and RpoZ (2 alpha, 1 beta, 1 beta' and 1 omega subunit) to form the RNA polymerase holoenzyme that can initiate transcription. Interacts (via sigma-70 factor domain 4) with anti-sigma-K factor RskA.

Its function is as follows. Sigma factors are initiation factors that promote the attachment of RNA polymerase to specific initiation sites and are then released. Extracytoplasmic function (ECF) sigma factors are held in an inactive form by an anti-sigma factor until released by regulated intramembrane proteolysis. The chain is ECF RNA polymerase sigma factor SigK (sigK) from Mycobacterium sp. (strain KMS).